Reading from the N-terminus, the 292-residue chain is Bifunctional protein FolD 1 (292 aa).

165 to 167 (GRS) contributes to the NADP(+) binding site.

The protein belongs to the tetrahydrofolate dehydrogenase/cyclohydrolase family. Homodimer.

The enzyme catalyses (6R)-5,10-methylene-5,6,7,8-tetrahydrofolate + NADP(+) = (6R)-5,10-methenyltetrahydrofolate + NADPH. It catalyses the reaction (6R)-5,10-methenyltetrahydrofolate + H2O = (6R)-10-formyltetrahydrofolate + H(+). It participates in one-carbon metabolism; tetrahydrofolate interconversion. Its function is as follows. Catalyzes the oxidation of 5,10-methylenetetrahydrofolate to 5,10-methenyltetrahydrofolate and then the hydrolysis of 5,10-methenyltetrahydrofolate to 10-formyltetrahydrofolate. In Myxococcus xanthus (strain DK1622), this protein is Bifunctional protein FolD 1.